The following is a 232-amino-acid chain: MAALPARAVLVDIEGTTTDVRFVHDTLFSVARRDLAAYVSAHAGGPEVEAARRAVARERGESEQAVSDGELAAALLAWIDQDRKETTLKALQGKIWRSAYESGGLRSHVYADVEPALRRWRDLGVTLAVFSSGSVEAQQLLFRHTTSGDLTGLFTAFFDTTTGPKREAGAYQRIAEALGLQPGEVLFLSDIVAELDAAAAAGMRTVQLLRPGTARDAESRHAVAERFDDIAP.

The protein belongs to the HAD-like hydrolase superfamily. MasA/MtnC family. In terms of assembly, monomer. Mg(2+) is required as a cofactor.

The catalysed reaction is 5-methylsulfanyl-2,3-dioxopentyl phosphate + H2O = 1,2-dihydroxy-5-(methylsulfanyl)pent-1-en-3-one + phosphate. It functions in the pathway amino-acid biosynthesis; L-methionine biosynthesis via salvage pathway; L-methionine from S-methyl-5-thio-alpha-D-ribose 1-phosphate: step 3/6. The protein operates within amino-acid biosynthesis; L-methionine biosynthesis via salvage pathway; L-methionine from S-methyl-5-thio-alpha-D-ribose 1-phosphate: step 4/6. Bifunctional enzyme that catalyzes the enolization of 2,3-diketo-5-methylthiopentyl-1-phosphate (DK-MTP-1-P) into the intermediate 2-hydroxy-3-keto-5-methylthiopentenyl-1-phosphate (HK-MTPenyl-1-P), which is then dephosphorylated to form the acireductone 1,2-dihydroxy-3-keto-5-methylthiopentene (DHK-MTPene). This Sorangium cellulosum (strain So ce56) (Polyangium cellulosum (strain So ce56)) protein is Enolase-phosphatase E1.